A 129-amino-acid polypeptide reads, in one-letter code: uncharacterized protein (129 aa).

Positions 1 to 21 (MAQNKTIAVALLLATLVAVMG) are cleaved as a signal peptide.

This is an uncharacterized protein from Oryza sativa subsp. japonica (Rice).